Reading from the N-terminus, the 255-residue chain is MLKVAALYQFTPLPDFRALREPLRELCAAHAIKGSILLAAEGINGTVAGTPRAIDALVSELQTGALFSGRLNDLELKFSQASAMPFARLKVRLKKEIVTLGDPATDPTRAVGIYVDPQDWNELIATPDTILLDVRNDFEVVMGSFEGAIDPQLARFGQFKDFAAQELDHRKHRRIAMYCTGGIRCEKASSYLLSRGFKEVYHLKGGILKYLEQIPESESRWRGECFVFDDRIALGHGLKESRQASPVMDGAPHDD.

Residues 125–219 enclose the Rhodanese domain; it reads ATPDTILLDV…YLEQIPESES (95 aa). Cys179 serves as the catalytic Cysteine persulfide intermediate.

Belongs to the TrhO family.

The catalysed reaction is uridine(34) in tRNA + AH2 + O2 = 5-hydroxyuridine(34) in tRNA + A + H2O. Its function is as follows. Catalyzes oxygen-dependent 5-hydroxyuridine (ho5U) modification at position 34 in tRNAs. The protein is tRNA uridine(34) hydroxylase of Nitrobacter winogradskyi (strain ATCC 25391 / DSM 10237 / CIP 104748 / NCIMB 11846 / Nb-255).